The chain runs to 129 residues: Protein GLUTAMINE DUMPER 2 (129 aa).

Topologically, residues 1 to 34 are extracellular; sequence MQTMEGRQYNYQDSINASSSMVVPHSPWHSPVPY. A helical membrane pass occupies residues 35–55; that stretch reads LFGGLAAMLALICVALLILAC. Residues 56–129 are Cytoplasmic-facing; that stretch reads SYWRLSGSAE…DHNEEEGRRG (74 aa). Positions 66 to 89 are disordered; it reads RDLEAGDDAKPDNDTNKTKHTEMP. The VIMAG motif lies at 94–98; sequence VIMAG. The interval 106–129 is disordered; the sequence is ATPATRSEQSCTCGDHNEEEGRRG. Residues 120 to 129 show a composition bias toward basic and acidic residues; the sequence is DHNEEEGRRG.

It belongs to the GLUTAMINE DUMPER 1 (TC 9.B.60) family. In terms of tissue distribution, expressed in the vascular tissues.

It localises to the membrane. Its function is as follows. Probable subunit of an amino acid transporter involved in the regulation of the amino acid metabolism. Stimulates amino acid export by activating nonselective amino acid facilitators. This chain is Protein GLUTAMINE DUMPER 2 (GDU2), found in Arabidopsis thaliana (Mouse-ear cress).